Consider the following 297-residue polypeptide: Transmembrane protein 178A (297 aa).

The first 25 residues, 1 to 25 (MEPRALVTALSLGLSLCSLGLLVTA), serve as a signal peptide directing secretion. The Extracellular portion of the chain corresponds to 26–179 (IFTDHWYETD…LLHLRRITAG (154 aa)). The span at 41-57 (ESCERSRAGADPPDQKN) shows a compositional bias: basic and acidic residues. Positions 41–86 (ESCERSRAGADPPDQKNRLMPLSHLPLRDSPPLGRRLLPGGPGRSD) are disordered. A compositionally biased stretch (low complexity) spans 68–79 (RDSPPLGRRLLP). The N-linked (GlcNAc...) asparagine glycan is linked to asparagine 158. The chain crosses the membrane as a helical span at residues 180–200 (FLGMAVAVLLCGCIVATVSFF). Over 201 to 208 (WEESLTQH) the chain is Cytoplasmic. Residues 209–229 (VAGLLFLMTGIFCTISLCTYA) form a helical membrane-spanning segment. Residues 230 to 257 (ASVSYDLNRVPKLIYSLPHDVEHGYSWS) lie on the Extracellular side of the membrane. A helical transmembrane segment spans residues 258–278 (IFCAWCSLGFIVAAGGLCIAY). The Cytoplasmic portion of the chain corresponds to 279 to 297 (PFISRTKIAHLKSGRDSTV).

Belongs to the TMEM178 family. As to quaternary structure, interacts with STIM1. Highly expressed in the bone and its expression increases during osteoclastogenesis.

The protein localises to the endoplasmic reticulum membrane. Its function is as follows. Acts as a negative regulator of osteoclast differentiation in basal and inflammatory conditions by regulating TNFSF11-induced Ca (2+) fluxes, thereby controlling the induction of NFATC1. In Mus musculus (Mouse), this protein is Transmembrane protein 178A (Tmem178a).